The chain runs to 197 residues: Peptide deformylase (197 aa).

Fe cation-binding residues include Cys106 and His148. Glu149 is a catalytic residue. His152 is a binding site for Fe cation.

The protein belongs to the polypeptide deformylase family. Fe(2+) is required as a cofactor.

The enzyme catalyses N-terminal N-formyl-L-methionyl-[peptide] + H2O = N-terminal L-methionyl-[peptide] + formate. Its function is as follows. Removes the formyl group from the N-terminal Met of newly synthesized proteins. Requires at least a dipeptide for an efficient rate of reaction. N-terminal L-methionine is a prerequisite for activity but the enzyme has broad specificity at other positions. In Mycobacteroides abscessus (strain ATCC 19977 / DSM 44196 / CCUG 20993 / CIP 104536 / JCM 13569 / NCTC 13031 / TMC 1543 / L948) (Mycobacterium abscessus), this protein is Peptide deformylase.